A 562-amino-acid polypeptide reads, in one-letter code: Ribonuclease Y (562 aa).

A helical transmembrane segment spans residues 1–21 (MNMLYFVLALLVGLAGGFFVG). Residues 108-129 (AAQDAARERETLSADRQETRRE) form a disordered region. Positions 252–312 (SVSVVPIPND…VRREVARHVL (61 aa)) constitute a KH domain. The HD domain occupies 378 to 471 (VLKHSVQVAH…VAAADAISAA (94 aa)).

It belongs to the RNase Y family.

It localises to the cell membrane. Functionally, endoribonuclease that initiates mRNA decay. This is Ribonuclease Y from Deinococcus geothermalis (strain DSM 11300 / CIP 105573 / AG-3a).